The chain runs to 275 residues: Large ribosomal subunit protein uL2 (275 aa).

Residues 208 to 275 are disordered; sequence AGAKRWRGRR…NMIIRDRRKK (68 aa). 2 stretches are compositionally biased toward basic residues: residues 209-219 and 254-263; these read GAKRWRGRRPT and KGYKTRRNKR.

Belongs to the universal ribosomal protein uL2 family. As to quaternary structure, part of the 50S ribosomal subunit. Forms a bridge to the 30S subunit in the 70S ribosome.

Functionally, one of the primary rRNA binding proteins. Required for association of the 30S and 50S subunits to form the 70S ribosome, for tRNA binding and peptide bond formation. It has been suggested to have peptidyltransferase activity; this is somewhat controversial. Makes several contacts with the 16S rRNA in the 70S ribosome. The polypeptide is Large ribosomal subunit protein uL2 (Coxiella burnetii (strain CbuK_Q154) (Coxiella burnetii (strain Q154))).